The chain runs to 159 residues: MEKLRRVLSGQDDEEQGLTAQVLDASSLSFNTRLKWFVICFVAGIFFSFLGTGLLWLPNGMKLFAVFYTLGNLAALASTCFLMGPVKQLKKMFETTRLLATIIMLLCLVFTLCAALWWRKKGLALLFCILQFLSMTWYSLSYIPYARDAVLKCCSSLLG.

The Cytoplasmic segment spans residues 1–36; sequence MEKLRRVLSGQDDEEQGLTAQVLDASSLSFNTRLKW. Position 9 is a phosphoserine (Ser-9). A helical transmembrane segment spans residues 37-57; that stretch reads FVICFVAGIFFSFLGTGLLWL. Over 58–62 the chain is Lumenal; sequence PNGMK. The helical transmembrane segment at 63–83 threads the bilayer; sequence LFAVFYTLGNLAALASTCFLM. Topologically, residues 84 to 97 are cytoplasmic; it reads GPVKQLKKMFETTR. Residues 98 to 118 traverse the membrane as a helical segment; that stretch reads LLATIIMLLCLVFTLCAALWW. The Lumenal portion of the chain corresponds to 119–122; the sequence is RKKG. Residues 123–143 traverse the membrane as a helical segment; that stretch reads LALLFCILQFLSMTWYSLSYI. The Cytoplasmic segment spans residues 144 to 159; that stretch reads PYARDAVLKCCSSLLG.

The protein belongs to the SFT2 family.

It localises to the membrane. May be involved in fusion of retrograde transport vesicles derived from an endocytic compartment with the Golgi complex. This chain is Vesicle transport protein SFT2A, found in Mus musculus (Mouse).